We begin with the raw amino-acid sequence, 256 residues long: Isoprenyl transferase (256 aa).

Asp-33 is a catalytic residue. Residue Asp-33 coordinates Mg(2+). Substrate contacts are provided by residues 34–37 (GNGR), Trp-38, Arg-46, His-50, and 78–80 (STE). The active-site Proton acceptor is the Asn-81. Residues Trp-82, Arg-84, Arg-201, and 207–209 (RIS) each bind substrate. A Mg(2+)-binding site is contributed by Glu-220.

It belongs to the UPP synthase family. Homodimer. The cofactor is Mg(2+).

Catalyzes the condensation of isopentenyl diphosphate (IPP) with allylic pyrophosphates generating different type of terpenoids. The polypeptide is Isoprenyl transferase (Staphylococcus aureus (strain COL)).